We begin with the raw amino-acid sequence, 118 residues long: D-dopachrome decarboxylase-B (118 aa).

The residue at position 2 (P2) is an N-acetylproline.

Belongs to the MIF family. In terms of assembly, homotrimer.

Its subcellular location is the cytoplasm. It carries out the reaction D-dopachrome + H(+) = 5,6-dihydroxyindole + CO2. Functionally, tautomerization of D-dopachrome with decarboxylation to give 5,6-dihydroxyindole (DHI). This chain is D-dopachrome decarboxylase-B (ddt-b), found in Xenopus laevis (African clawed frog).